Reading from the N-terminus, the 246-residue chain is Putative outer membrane protein YiaT (246 aa).

An N-terminal signal peptide occupies residues Met-1–Ala-21.

Belongs to the MipA/OmpV family.

The protein resides in the cell outer membrane. The chain is Putative outer membrane protein YiaT (yiaT) from Escherichia coli (strain K12).